The sequence spans 1021 residues: Ubiquitin-activating enzyme E1 1 (1021 aa).

ATP is bound by residues arginine 22, alanine 442, and aspartate 468. Residue aspartate 470 coordinates Mg(2+). ATP is bound by residues arginine 479, lysine 492, valine 518, and 542 to 543; that span reads DN. Aspartate 542 contributes to the Mg(2+) binding site. Cysteine 598 (glycyl thioester intermediate) is an active-site residue.

The protein belongs to the ubiquitin-activating E1 family. In terms of assembly, monomer.

The protein resides in the cytoplasm. The protein localises to the nucleus. It carries out the reaction ATP + ubiquitin + [E1 ubiquitin-activating enzyme]-L-cysteine = AMP + diphosphate + S-ubiquitinyl-[E1 ubiquitin-activating enzyme]-L-cysteine.. It participates in protein modification; protein ubiquitination. Its function is as follows. E1 ubiquitin-activating enzyme that catalyzes the first step in ubiquitin conjugation to mark cellular proteins for degradation through the ubiquitin-proteasome system. Activates ubiquitin by first adenylating its C-terminal glycine residue with ATP, and thereafter linking this residue to the side chain of a cysteine residue in E1, yielding a ubiquitin-E1 thioester and free AMP. This chain is Ubiquitin-activating enzyme E1 1 (UBA1), found in Candida albicans (strain WO-1) (Yeast).